The sequence spans 422 residues: Probable protease eep (422 aa).

H18 contacts Zn(2+). The active site involves E19. H22 contributes to the Zn(2+) binding site. 3 helical membrane-spanning segments follow: residues 176–196 (FAGP…AVFL), 349–369 (VVFL…LPIP), and 394–414 (EGII…LVTW). The PDZ domain occupies 179–273 (PMNNFILGFI…EEQLTVTPEK (95 aa)).

It belongs to the peptidase M50B family. It depends on Zn(2+) as a cofactor.

It is found in the cell membrane. Functionally, involved in production of the peptide pheromone cAD1. The polypeptide is Probable protease eep (eep) (Enterococcus faecalis (strain ATCC 700802 / V583)).